The sequence spans 119 residues: Phosphoribosyl-AMP cyclohydrolase (119 aa).

Aspartate 71 serves as a coordination point for Mg(2+). Cysteine 72 lines the Zn(2+) pocket. Aspartate 73 and aspartate 75 together coordinate Mg(2+). Zn(2+) is bound by residues cysteine 90 and cysteine 97.

This sequence belongs to the PRA-CH family. In terms of assembly, homodimer. Mg(2+) serves as cofactor. Requires Zn(2+) as cofactor.

It is found in the cytoplasm. The enzyme catalyses 1-(5-phospho-beta-D-ribosyl)-5'-AMP + H2O = 1-(5-phospho-beta-D-ribosyl)-5-[(5-phospho-beta-D-ribosylamino)methylideneamino]imidazole-4-carboxamide. It participates in amino-acid biosynthesis; L-histidine biosynthesis; L-histidine from 5-phospho-alpha-D-ribose 1-diphosphate: step 3/9. Functionally, catalyzes the hydrolysis of the adenine ring of phosphoribosyl-AMP. This chain is Phosphoribosyl-AMP cyclohydrolase, found in Brucella abortus (strain 2308).